We begin with the raw amino-acid sequence, 273 residues long: Chaperone protein PsaB (273 aa).

An N-terminal signal peptide occupies residues M1 to S31. C128 and C163 form a disulfide bridge.

This sequence belongs to the periplasmic pilus chaperone family.

It localises to the periplasm. Its function is as follows. Required for the biogenesis of the pH 6 antigen. The sequence is that of Chaperone protein PsaB (psaB) from Yersinia pestis.